The primary structure comprises 317 residues: Melanocyte-stimulating hormone receptor (317 aa).

At 1-37 the chain is on the extracellular side; that stretch reads MPVLGSQRRLLGSLNCTPPATFSLTLAPNRTGPQCLE. The N-linked (GlcNAc...) asparagine glycan is linked to N29. Residues 38–63 form a helical membrane-spanning segment; sequence VSIPDGLFLSLGLVSLVENVLVVAAI. Topologically, residues 64 to 72 are cytoplasmic; that stretch reads AKNRNLHSP. Residues 73-93 traverse the membrane as a helical segment; the sequence is MYYFICCLAVSDLLVSVSNVL. The Extracellular portion of the chain corresponds to 94–118; that stretch reads ETAVMLLLEAGALAARAAVVQQLDN. The helical transmembrane segment at 119–140 threads the bilayer; that stretch reads VIDVLICGSMVSSLCFLGAIAM. The Cytoplasmic portion of the chain corresponds to 141-163; sequence DRYISIFYALRYHSVVTLPRAWR. A helical membrane pass occupies residues 164-183; it reads IIAAIWVASILTSLLFITYY. Over 184 to 191 the chain is Extracellular; it reads NHTVVLLC. The helical transmembrane segment at 192–211 threads the bilayer; sequence LVGFFIAMLALMAILYVHML. Residues 212-240 lie on the Cytoplasmic side of the membrane; the sequence is ARACQHARDIARLQKRQHPIHQGFGLKGA. The helical transmembrane segment at 241–266 threads the bilayer; it reads ATLTILLGVFFLCWGPFFLHLSLIVL. Over 267–279 the chain is Extracellular; it reads CPQHPTCGCIFKN. A helical membrane pass occupies residues 280 to 300; that stretch reads FNLFLALIICNAIVDPLIYAF. Topologically, residues 301-317 are cytoplasmic; the sequence is RSQELRKTLQEVLQCSW. A lipid anchor (S-palmitoyl cysteine) is attached at C315.

The protein belongs to the G-protein coupled receptor 1 family. Interacts with MGRN1, but does not undergo MGRN1-mediated ubiquitination; this interaction competes with GNAS-binding and thus inhibits agonist-induced cAMP production. Interacts with OPN3; the interaction results in a decrease in MC1R-mediated cAMP signaling and ultimately a decrease in melanin production in melanocytes.

The protein localises to the cell membrane. Functionally, receptor for MSH (alpha, beta and gamma) and ACTH. The activity of this receptor is mediated by G proteins which activate adenylate cyclase. Mediates melanogenesis, the production of eumelanin (black/brown) and phaeomelanin (red/yellow), via regulation of cAMP signaling in melanocytes. The sequence is that of Melanocyte-stimulating hormone receptor (MC1R) from Alces alces alces (European moose).